An 813-amino-acid chain; its full sequence is Receptor-like protein 48 (813 aa).

A signal peptide spans 1-30 (MHSCSERRMMTVIWSLCLIFCLSNSILAIA). Over 31–786 (KDLCLPDQRD…EDEEKEEKNQ (756 aa)) the chain is Extracellular. N-linked (GlcNAc...) asparagine glycans are attached at residues N69, N105, and N123. 3 LRR repeats span residues 111–134 (LQHLQSLELSSNNISGILPDSIGN), 136–159 (KYLRSLSFRTCHLFGKIPSSLGSL), and 160–182 (SYLTHLDLSYNDFTSEGPDSGGN). N-linked (GlcNAc...) asparagine glycans are attached at residues N195 and N216. LRR repeat units lie at residues 196–219 (LSSVTWIDLGSNQLKGMLPSNMSS), 220–244 (LSKLVSFDISENSFSGSIPSSLFMI), 245–260 (PSLNFSGPLEIGNISS), 261–285 (HSELGYLYMGENNFNGPIPGSLSKL), 288–310 (LRDLSLSFWNTGRGIVDFSIFLH), 311–335 (LKSLCSLDLSYLNTRSMVDLSFFSH), 336–359 (LMSLDELDLSGINLKISSTLSFPS), 361–381 (TGTLILASCNIVEFPKFLENQ), 382–405 (TSLFYLDISANHIEGQVPEWLWRL), 406–432 (PTLSFVNIAQNSFSGELPMLPNSIYSF), 434–450 (ASDNQFSGEIPRTVCEL), 451–473 (VSLNTLVLSNNKFSGSIPRCFEN), 475–498 (KTISILHLRNNSLSGVFPKEIISE), 500–521 (LTSLDVGHNWLSGQLPKSLIKC), 523–544 (DLEFLNVEDNRINDKFPFWLRS), 545–571 (LSNLQILVLRSNEFYGPIFSLEDSLSF), 572–595 (PKLRIFDISENHFTGVLPSDYFAG), 642–666 (FTIYKTIDVSGNRLEGDIPESIGIL), 667–690 (KELIVLNMSNNAFTGHIPPSLSNL), 691–714 (SNLQSLDLSQNRLSGSIPPELGKL), and 716–739 (FLEWMNFSYNRLEGPIPQATQIQS). N-linked (GlcNAc...) asparagine glycosylation is found at N248 and N257. N380 carries an N-linked (GlcNAc...) asparagine glycan. A glycan (N-linked (GlcNAc...) asparagine) is linked at N484. N-linked (GlcNAc...) asparagine glycosylation is found at N673 and N689. Residues N721 and N741 are each glycosylated (N-linked (GlcNAc...) asparagine). The tract at residues 756–785 (FLNKCGGEEEEEEEATKQEEDEDEEKEEKN) is disordered. The span at 763–781 (EEEEEEEATKQEEDEDEEK) shows a compositional bias: acidic residues. A helical transmembrane segment spans residues 787–807 (VFSWIAAAIGYVPGVFCGLTI). Residues 808-813 (AHILTS) are Cytoplasmic-facing.

This sequence belongs to the RLP family.

It is found in the cell membrane. Its function is as follows. Plays a role in root hair development. The sequence is that of Receptor-like protein 48 from Arabidopsis thaliana (Mouse-ear cress).